We begin with the raw amino-acid sequence, 270 residues long: Acetylglutamate kinase (270 aa).

Residues 41-42 (GG), R63, and N166 each bind substrate.

This sequence belongs to the acetylglutamate kinase family. ArgB subfamily.

It is found in the cytoplasm. It carries out the reaction N-acetyl-L-glutamate + ATP = N-acetyl-L-glutamyl 5-phosphate + ADP. Its pathway is amino-acid biosynthesis; L-arginine biosynthesis; N(2)-acetyl-L-ornithine from L-glutamate: step 2/4. Functionally, catalyzes the ATP-dependent phosphorylation of N-acetyl-L-glutamate. This Anaeromyxobacter dehalogenans (strain 2CP-C) protein is Acetylglutamate kinase.